The sequence spans 1234 residues: Coiled-coil domain-containing protein CG32809 (1234 aa).

Basic and acidic residues predominate over residues 1–11 (MLIRWKSKDKS). Disordered stretches follow at residues 1–88 (MLIR…HAHQ), 107–129 (KNKK…FDDD), and 330–350 (KVSM…NYEE). The segment covering 12–25 (ASSNQSVGGSSSSS) has biased composition (low complexity). Basic and acidic residues predominate over residues 55-69 (GDERRRAMRRDDPRR). Residues 412-436 (HRIRVEHMERQLANLTGLVQKALVN) are a coiled coil. The segment at 498 to 548 (DIQGIPKSHNPLHAAETKPTKPAIKSSTLPRTSSQERDRLKPPPPPKPIVL) is disordered. Coiled coils occupy residues 565 to 594 (EVYN…SQAQ) and 630 to 666 (TRIS…EVIN). 4 disordered regions span residues 754 to 793 (EQRL…ALSG), 815 to 852 (IAQQ…DESA), 928 to 1011 (LHSY…PPNQ), and 1028 to 1070 (SANA…ESGN). 5 stretches are compositionally biased toward low complexity: residues 817-837 (QQQQ…QHQQ), 952-965 (TSSS…GSSS), 993-1004 (TSSRSPLASPTS), 1028-1039 (SANANANANSNA), and 1046-1068 (VGET…GNES). Positions 1077–1105 (VALEMRHQELLKKQKMLQEQYQRLQQMSK) form a coiled coil.

The sequence is that of Coiled-coil domain-containing protein CG32809 from Drosophila melanogaster (Fruit fly).